Reading from the N-terminus, the 390-residue chain is Homoserine O-succinyltransferase (390 aa).

In terms of domain architecture, AB hydrolase-1 spans 59-369; sequence NAVLVCHALN…PHGHDAFLLD (311 aa). S165 serves as the catalytic Nucleophile. R235 is a substrate binding site. Catalysis depends on residues D330 and H363. A substrate-binding site is contributed by D364.

This sequence belongs to the AB hydrolase superfamily. MetX family. In terms of assembly, homodimer.

The protein resides in the cytoplasm. It catalyses the reaction L-homoserine + succinyl-CoA = O-succinyl-L-homoserine + CoA. It functions in the pathway amino-acid biosynthesis; L-methionine biosynthesis via de novo pathway; O-succinyl-L-homoserine from L-homoserine: step 1/1. Functionally, transfers a succinyl group from succinyl-CoA to L-homoserine, forming succinyl-L-homoserine. In Cupriavidus metallidurans (strain ATCC 43123 / DSM 2839 / NBRC 102507 / CH34) (Ralstonia metallidurans), this protein is Homoserine O-succinyltransferase.